Consider the following 371-residue polypeptide: Leu/Ile/Val-binding protein homolog 2 (371 aa).

The first 23 residues, 1 to 23, serve as a signal peptide directing secretion; the sequence is MKKSLFCGVCLCALVAMGGTSFA.

It belongs to the leucine-binding protein family.

In terms of biological role, component of an amino-acid transport system. This Brucella abortus (strain 2308) protein is Leu/Ile/Val-binding protein homolog 2.